Consider the following 365-residue polypeptide: Eukaryotic translation initiation factor 3 subunit H (365 aa).

The MPN domain maps to 11–160 (VKVEALVVMK…LRAFRLSPKF (150 aa)).

The protein belongs to the eIF-3 subunit H family. As to quaternary structure, component of the eukaryotic translation initiation factor 3 (eIF-3) complex.

It localises to the cytoplasm. Its function is as follows. Component of the eukaryotic translation initiation factor 3 (eIF-3) complex, which is involved in protein synthesis of a specialized repertoire of mRNAs and, together with other initiation factors, stimulates binding of mRNA and methionyl-tRNAi to the 40S ribosome. The eIF-3 complex specifically targets and initiates translation of a subset of mRNAs involved in cell proliferation. The sequence is that of Eukaryotic translation initiation factor 3 subunit H from Aspergillus niger (strain ATCC MYA-4892 / CBS 513.88 / FGSC A1513).